The sequence spans 284 residues: 3-methyl-2-oxobutanoate hydroxymethyltransferase 2 (284 aa).

Mg(2+) contacts are provided by Asp49 and Asp88. Residues 49-50 (DS), Asp88, and Lys118 each bind 3-methyl-2-oxobutanoate. Glu120 contacts Mg(2+). The active-site Proton acceptor is the Glu187.

This sequence belongs to the PanB family. Homodecamer; pentamer of dimers. Requires Mg(2+) as cofactor.

The protein localises to the cytoplasm. The enzyme catalyses 3-methyl-2-oxobutanoate + (6R)-5,10-methylene-5,6,7,8-tetrahydrofolate + H2O = 2-dehydropantoate + (6S)-5,6,7,8-tetrahydrofolate. The protein operates within cofactor biosynthesis; (R)-pantothenate biosynthesis; (R)-pantoate from 3-methyl-2-oxobutanoate: step 1/2. Functionally, catalyzes the reversible reaction in which hydroxymethyl group from 5,10-methylenetetrahydrofolate is transferred onto alpha-ketoisovalerate to form ketopantoate. The polypeptide is 3-methyl-2-oxobutanoate hydroxymethyltransferase 2 (Burkholderia ambifaria (strain ATCC BAA-244 / DSM 16087 / CCUG 44356 / LMG 19182 / AMMD) (Burkholderia cepacia (strain AMMD))).